Reading from the N-terminus, the 93-residue chain is Consomatin G1 (93 aa).

The N-terminal stretch at 1-22 (MQTAYWVMLMMMVCITAPLPEG) is a signal peptide. Residues 23 to 69 (GKPNSGIRGLVPNDLTPQHTLRSLISRRQTDVLLDATLLTTPAPEQR) constitute a propeptide that is removed on maturation. A disulfide bond links Cys-72 and Cys-77. The residue at position 74 (Trp-74) is a D-tryptophan. The propeptide occupies 79–93 (PRPYPWRRRDLNGKR).

Belongs to the conotoxin C superfamily. Consomatin family. Expressed by the venom duct.

The protein localises to the secreted. Its function is as follows. Potently activates human somatostatin receptors (SSTR) with a specific activation of SSTR2 (EC(50)=2.6 nM). The sequence is that of Consomatin G1 from Conus geographus (Geography cone).